The following is a 370-amino-acid chain: MYIQNLELTSYRNYDHAELQFENKVNVIIGENAQGKTNLMEAIYVLSMAKSHRTSNDKELIRWDKDYAKIEGRVMKQNGAIPMQLVISKKGKKGKVNHIEQQKLSQYVGALNTIMFAPEDLNLVKGSPQVRRRFLDMEIGQVSPVYLHDLSLYQKILSQRNHFLKQLQTRKQTDRTMLDVLTDQLVEVAAKVVVKRLQFTAQLEKWAQPIHAGISRGLEELTLKYHTALDVSDPLDLSKIGDSYQEAFSKLREKEIERGVTLSGPHRDDVLFYVNGRDVQTYGSQGQQRTTALSLKLAEIDLIHEEIGEYPILLLDDVLSELDDYRQSHLLHTIQGRVQTFVTTTSVDGIDHETLRQAGMFRVQNGALVK.

30–37 (GENAQGKT) is a binding site for ATP.

It belongs to the RecF family. In terms of assembly, recruited to foci following DNA damage; probably interacts with RecO.

It is found in the cytoplasm. The protein resides in the nucleoid. Functionally, the RecF protein is involved in DNA metabolism; it is required for DNA replication and normal SOS inducibility. RecF binds preferentially to single-stranded, linear DNA. It also seems to bind ATP. Is recruited to repair centers, foci that are the site of double-strand DNA break(s) after RecN and RecO; recruitment may depend on RecO. A positive modulator of RecA. The sequence is that of DNA replication and repair protein RecF from Bacillus subtilis (strain 168).